Here is a 322-residue protein sequence, read N- to C-terminus: Serine protease 38 (322 aa).

Positions 1–28 (MAALTSGLGVLGYLLFPLLLASPTWVTS) are cleaved as a signal peptide. Positions 29 to 55 (VSRRHPKSQANSLSGDVACGQPVLQGK) are cleaved as a propeptide — activation peptide. Positions 56-289 (LLGGEFARDR…FLSWIRYHLQ (234 aa)) constitute a Peptidase S1 domain. A disulfide bond links cysteine 81 and cysteine 97. Residues histidine 96 and aspartate 146 each act as charge relay system in the active site. Asparagine 176 carries an N-linked (GlcNAc...) asparagine glycan. Cystine bridges form between cysteine 179/cysteine 247, cysteine 210/cysteine 226, and cysteine 237/cysteine 265. Serine 241 (charge relay system) is an active-site residue. 2 N-linked (GlcNAc...) asparagine glycosylation sites follow: asparagine 250 and asparagine 276.

It belongs to the peptidase S1 family.

Its subcellular location is the secreted. This chain is Serine protease 38 (Prss38), found in Mus musculus (Mouse).